The chain runs to 414 residues: MFLTLDDFELEGKTVALRVDINSPIDVNTGDILDDTRIKACSDTIKSLSEKGAKVVILAHQSRPGKKDFTTLEAHAKKLSEVLNMEVTHVDGLICASAREAILAMDNGEIILLENVRLLAEEVLSDWKSWEEITPEKQAKTVMIKKLHPFFDYFVNDAFAAAHRAQPSLVGFSYYVPMLCGRVMEKELFTLTKVLKNPERPCVFALGGAKADDSIEVLKNVLEKQTADQVLTSGVVANIFLVAKGYKIGPNENVIADMGYTNQIEIAKELISKYGDKIVVPIDAALNVDGERVEKELDLNEEITYPIHDMGEKTMKLYEEILKDAKTVVANGPAGVFENKNFLKGTEELLKSTANSKGFSVIGGGHLSAAAEVVGLAGKMDHISTGGGACIEFLAGKKLPVIEMLSKSYEKHKL.

Substrate is bound by residues 20–22, Arg-37, 60–63, Arg-117, and Arg-164; these read DIN and HQSR. ATP is bound by residues Glu-338 and 364 to 367; that span reads GGHL.

This sequence belongs to the phosphoglycerate kinase family. Monomer.

The protein localises to the cytoplasm. It catalyses the reaction (2R)-3-phosphoglycerate + ATP = (2R)-3-phospho-glyceroyl phosphate + ADP. The protein operates within carbohydrate degradation; glycolysis; pyruvate from D-glyceraldehyde 3-phosphate: step 2/5. The protein is Phosphoglycerate kinase of Methanococcus maripaludis (strain DSM 14266 / JCM 13030 / NBRC 101832 / S2 / LL).